The following is a 562-amino-acid chain: Delta-1-pyrroline-5-carboxylate dehydrogenase, mitochondrial (562 aa).

Residues 1–23 (MLPLPSLRRSLLSHAWRGAGLRW) constitute a mitochondrion transit peptide. The residue at position 30 (Lys-30) is an N6-succinyllysine. Ser-43 is subject to Phosphoserine. Lys-51 carries the post-translational modification N6-acetyllysine. N6-acetyllysine; alternate occurs at positions 92, 98, 113, 129, and 174. An N6-succinyllysine; alternate mark is found at Lys-92, Lys-98, Lys-113, Lys-129, and Lys-174. Residues Ser-207, Lys-232, and 285–289 (GSVPT) each bind NAD(+). The Proton acceptor role is filled by Glu-313. Lys-317 is subject to N6-acetyllysine. Lys-346 bears the N6-succinyllysine mark. Catalysis depends on Cys-347, which acts as the Nucleophile. An N6-acetyllysine; alternate modification is found at Lys-357. Lys-357 carries the post-translational modification N6-succinyllysine; alternate. N6-acetyllysine is present on residues Lys-364 and Lys-375. An N6-succinyllysine modification is found at Lys-394. NAD(+) is bound at residue Glu-446. Residue Lys-461 is modified to N6-acetyllysine. The residue at position 508 (Lys-508) is an N6-acetyllysine; alternate. N6-succinyllysine; alternate is present on Lys-508. Residue Ser-512 coordinates substrate. Lys-530 and Lys-551 each carry N6-acetyllysine.

It belongs to the aldehyde dehydrogenase family. As to quaternary structure, homodimer. Acetylation of Lys-98, Lys-113 and Lys-401 is observed in liver mitochondria from fasted mice but not from fed mice.

It localises to the mitochondrion matrix. The enzyme catalyses L-glutamate 5-semialdehyde + NAD(+) + H2O = L-glutamate + NADH + 2 H(+). Its pathway is amino-acid degradation; L-proline degradation into L-glutamate; L-glutamate from L-proline: step 2/2. In terms of biological role, irreversible conversion of delta-1-pyrroline-5-carboxylate (P5C), derived either from proline or ornithine, to glutamate. This is a necessary step in the pathway interconnecting the urea and tricarboxylic acid cycles. The preferred substrate is glutamic gamma-semialdehyde, other substrates include succinic, glutaric and adipic semialdehydes. The sequence is that of Delta-1-pyrroline-5-carboxylate dehydrogenase, mitochondrial (Aldh4a1) from Mus musculus (Mouse).